We begin with the raw amino-acid sequence, 196 residues long: Chromophore lyase CpcS/CpeS 2 (196 aa).

The protein belongs to the CpcS/CpeS biliprotein lyase family.

In terms of biological role, covalently attaches a chromophore to Cys residue(s) of phycobiliproteins. This chain is Chromophore lyase CpcS/CpeS 2, found in Trichodesmium erythraeum (strain IMS101).